A 349-amino-acid chain; its full sequence is Ion-translocating oxidoreductase complex subunit D (349 aa).

3 consecutive transmembrane segments (helical) span residues 20–42 (VMQR…FGWG), 77–99 (SAML…WMIV), and 124–144 (AMAA…TWIA). Thr185 is modified (FMN phosphoryl threonine). 5 helical membrane-spanning segments follow: residues 212 to 232 (STGV…LVLL), 239 to 259 (WHIS…GFLL), 265 to 285 (ASPL…FIAT), 291 to 311 (ATSP…VYII), and 315 to 335 (GGYP…APFI).

The protein belongs to the NqrB/RnfD family. The complex is composed of six subunits: RnfA, RnfB, RnfC, RnfD, RnfE and RnfG. FMN is required as a cofactor.

It localises to the cell inner membrane. Its function is as follows. Part of a membrane-bound complex that couples electron transfer with translocation of ions across the membrane. This is Ion-translocating oxidoreductase complex subunit D from Shewanella baltica (strain OS185).